We begin with the raw amino-acid sequence, 232 residues long: Cytidylate kinase (232 aa).

Residues 1–21 (MSEDTPLVVAMDGPSGTGKSS) form a disordered region. 13–21 (GPSGTGKSS) contributes to the ATP binding site.

It belongs to the cytidylate kinase family. Type 1 subfamily.

Its subcellular location is the cytoplasm. The catalysed reaction is CMP + ATP = CDP + ADP. It carries out the reaction dCMP + ATP = dCDP + ADP. This is Cytidylate kinase from Nocardia farcinica (strain IFM 10152).